The sequence spans 77 residues: Conotoxin Vc6.14 (77 aa).

Residues 1–19 (MEKLTILLLVAAVLMSTQA) form the signal peptide. A propeptide spanning residues 20–37 (MFQGGGEKRPKDKIKFLS) is cleaved from the precursor. 3 disulfides stabilise this stretch: C51–C65, C58–C69, and C64–C74.

The protein belongs to the conotoxin O2 superfamily. In terms of tissue distribution, expressed by the venom duct.

It localises to the secreted. Inhibits voltage-gated ion channels. This is Conotoxin Vc6.14 from Conus victoriae (Queen Victoria cone).